The chain runs to 239 residues: Ribosomal RNA small subunit methyltransferase G (239 aa).

Residues Gly-77, Phe-82, 128 to 129 (AE), and Arg-147 contribute to the S-adenosyl-L-methionine site.

Belongs to the methyltransferase superfamily. RNA methyltransferase RsmG family.

Its subcellular location is the cytoplasm. Specifically methylates the N7 position of guanine in position 535 of 16S rRNA. This chain is Ribosomal RNA small subunit methyltransferase G, found in Bacillus cereus (strain AH187).